The primary structure comprises 187 residues: MSIKSDRWIRRAAEAGMIEPFEAGQVRTANGGRIVSYGTSSYGYDVRCADEFKIFTNINSTIVDPKQFDEKSFVDFKGDVCIIPPNSFALARTVEYFRIPRSVLTICLGKSTYARCGIIVNVTPLEPEWEGHVTLEFSNTTPLPAKIYAGEGCAQMLFLESDEVCETSYRDRGGKYQGQRGVTLPRT.

DCTP is bound by residues 110–115 (KSTYAR), 134–136 (TLE), Q155, Y169, and Q179. Residue E136 is the Proton donor/acceptor of the active site.

It belongs to the dCTP deaminase family. As to quaternary structure, homotrimer.

It catalyses the reaction dCTP + H2O + H(+) = dUTP + NH4(+). Its pathway is pyrimidine metabolism; dUMP biosynthesis; dUMP from dCTP (dUTP route): step 1/2. Catalyzes the deamination of dCTP to dUTP. This Bordetella petrii (strain ATCC BAA-461 / DSM 12804 / CCUG 43448) protein is dCTP deaminase.